The following is a 610-amino-acid chain: ESX-5 secretion system protein EccA5 (610 aa).

357–364 (GPPGTGKT) contacts ATP.

This sequence belongs to the CbxX/CfxQ family. In terms of assembly, part of the ESX-5 / type VII secretion system (T7SS), which is composed of cytosolic and membrane components.

Its subcellular location is the cytoplasm. Its function is as follows. Part of an ESX-5 / type VII specialized secretion system (T7SS), which exports several proteins. EccA5 exhibits ATPase activity and may provide energy for the export of ESX-5 substrates. This is ESX-5 secretion system protein EccA5 from Mycobacterium bovis (strain ATCC BAA-935 / AF2122/97).